We begin with the raw amino-acid sequence, 661 residues long: FAST kinase domain-containing protein 3, mitochondrial (661 aa).

Residues 592 to 650 (VALCIDGPQRFCLDSKHLLGKEATKQRHLRLLGYQVVQLPYHELELLTSRLELVDYLQR) enclose the RAP domain.

This sequence belongs to the FAST kinase family. In terms of tissue distribution, expression detected in spleen, testis, colon, heart, smooth muscle, kidney, brain, lung, liver, brown and white adipose tissue with highest expression in testis and smooth muscle.

It is found in the mitochondrion. In terms of biological role, required for normal mitochondrial respiration. Increases steady-state levels and half-lives of a subset of mature mitochondrial mRNAs MT-ND2, MT-ND3, MT-CYTB, MT-CO2, and MT-ATP8/6. Promotes MT-CO1 mRNA translation and increases mitochondrial complex IV assembly and activity. The protein is FAST kinase domain-containing protein 3, mitochondrial (Fastkd3) of Mus musculus (Mouse).